Consider the following 211-residue polypeptide: Ribosomal RNA small subunit methyltransferase G (211 aa).

S-adenosyl-L-methionine contacts are provided by residues G73, 126-127 (IE), and R142.

This sequence belongs to the methyltransferase superfamily. RNA methyltransferase RsmG family.

The protein localises to the cytoplasm. It catalyses the reaction guanosine(527) in 16S rRNA + S-adenosyl-L-methionine = N(7)-methylguanosine(527) in 16S rRNA + S-adenosyl-L-homocysteine. Functionally, specifically methylates the N7 position of guanine in position 527 of 16S rRNA. The chain is Ribosomal RNA small subunit methyltransferase G from Methylorubrum extorquens (strain CM4 / NCIMB 13688) (Methylobacterium extorquens).